A 394-amino-acid chain; its full sequence is Elongation factor Tu (394 aa).

One can recognise a tr-type G domain in the interval 10 to 204 (KPHINIGTIG…AVDDNIPTPE (195 aa)). Positions 19–26 (GHVDHGKT) are G1. 19-26 (GHVDHGKT) lines the GTP pocket. Threonine 26 is a Mg(2+) binding site. Residues 60-64 (GITIN) are G2. The tract at residues 81–84 (DCPG) is G3. GTP-binding positions include 81 to 85 (DCPGH) and 136 to 139 (NKID). The interval 136 to 139 (NKID) is G4. Residues 174–176 (SAL) are G5.

The protein belongs to the TRAFAC class translation factor GTPase superfamily. Classic translation factor GTPase family. EF-Tu/EF-1A subfamily. As to quaternary structure, monomer.

The protein resides in the cytoplasm. It carries out the reaction GTP + H2O = GDP + phosphate + H(+). In terms of biological role, GTP hydrolase that promotes the GTP-dependent binding of aminoacyl-tRNA to the A-site of ribosomes during protein biosynthesis. In Chlamydia abortus (strain DSM 27085 / S26/3) (Chlamydophila abortus), this protein is Elongation factor Tu.